We begin with the raw amino-acid sequence, 632 residues long: Actin-related protein 8 (632 aa).

Residues 1–30 (MTQAEREQENGKEKEKEREKEKEKEKEQRG) are compositionally biased toward basic and acidic residues. The interval 1–43 (MTQAEREQENGKEKEKEREKEKEKEKEQRGIKRPIAPPVIPEP) is disordered. 288 to 291 (DVGD) contributes to the ATP binding site. 2 disordered regions span residues 410–429 (MTSLQHRSQGDPEDPHDEHY) and 434–494 (QSKQ…GGAE). Low complexity predominate over residues 434–443 (QSKQDQSSKA).

This sequence belongs to the actin family. ARP8 subfamily. Component of the chromatin remodeling INO80 complex; specifically part of a complex module associated with the DBINO domain of INO80. Exists as monomers and dimers, but the dimer is most probably the biologically relevant form required for stable interactions with histones that exploits the twofold symmetry of the nucleosome core.

The protein resides in the nucleus. It is found in the chromosome. In terms of biological role, plays an important role in the functional organization of mitotic chromosomes. Exhibits low basal ATPase activity, and unable to polymerize. Functionally, proposed core component of the chromatin remodeling INO80 complex which is involved in transcriptional regulation, DNA replication and probably DNA repair. Required for the recruitment of INO80 (and probably the INO80 complex) to sites of DNA damage Strongly prefer nucleosomes and H3-H4 tetramers over H2A-H2B dimers, suggesting it may act as a nucleosome recognition module within the complex. This is Actin-related protein 8 (actr8) from Salmo salar (Atlantic salmon).